A 438-amino-acid chain; its full sequence is DEAD-box ATP-dependent RNA helicase 58, chloroplastic (438 aa).

The N-terminal 44 residues, 1 to 44 (MAAFSGCASPLSTTLRSGLAPFTLRHRLRLRRLRASAATLREVC), are a transit peptide targeting the chloroplast. The short motif at 41–69 (REVCAGRVPEHVLQRAEEVGYVVPTEVQE) is the Q motif element. The Helicase ATP-binding domain occupies 72-245 (LPVLLSGQDC…DCVQHKWTKT (174 aa)). ATP is bound at residue 85–92 (AQTGSGKT). The short motif at 190–193 (DEVD) is the DEAD box element. The region spanning 274–436 (RLHVLLSLLE…ELPVESMFAF (163 aa)) is the Helicase C-terminal domain.

It belongs to the DEAD box helicase family.

It is found in the plastid. The protein resides in the chloroplast. The catalysed reaction is ATP + H2O = ADP + phosphate + H(+). In Oryza sativa subsp. japonica (Rice), this protein is DEAD-box ATP-dependent RNA helicase 58, chloroplastic.